The chain runs to 91 residues: Small ribosomal subunit protein uS19 (91 aa).

Belongs to the universal ribosomal protein uS19 family.

In terms of biological role, protein S19 forms a complex with S13 that binds strongly to the 16S ribosomal RNA. The sequence is that of Small ribosomal subunit protein uS19 from Janthinobacterium sp. (strain Marseille) (Minibacterium massiliensis).